A 393-amino-acid chain; its full sequence is S-adenosylmethionine synthase 2 (393 aa).

Mg(2+) is bound at residue Glu-9. His-15 contributes to the ATP binding site. A K(+)-binding site is contributed by Glu-43. Glu-56 and Gln-99 together coordinate L-methionine. ATP is bound by residues 167 to 169, 235 to 238, Asp-246, 252 to 253, Ala-269, Lys-273, and Lys-277; these read DGK, SGRF, and RK. Asp-246 is a binding site for L-methionine. Position 277 (Lys-277) interacts with L-methionine.

It belongs to the AdoMet synthase family. As to quaternary structure, homotetramer. It depends on Mn(2+) as a cofactor. The cofactor is Mg(2+). Requires Co(2+) as cofactor. K(+) is required as a cofactor.

It localises to the cytoplasm. The enzyme catalyses L-methionine + ATP + H2O = S-adenosyl-L-methionine + phosphate + diphosphate. Its pathway is amino-acid biosynthesis; S-adenosyl-L-methionine biosynthesis; S-adenosyl-L-methionine from L-methionine: step 1/1. Catalyzes the formation of S-adenosylmethionine from methionine and ATP. The reaction comprises two steps that are both catalyzed by the same enzyme: formation of S-adenosylmethionine (AdoMet) and triphosphate, and subsequent hydrolysis of the triphosphate. This is S-adenosylmethionine synthase 2 (METK2) from Populus trichocarpa (Western balsam poplar).